The following is a 288-amino-acid chain: UDP-3-O-acyl-N-acetylglucosamine deacetylase (288 aa).

Positions 79, 236, and 240 each coordinate Zn(2+). His263 (proton donor) is an active-site residue.

This sequence belongs to the LpxC family. Requires Zn(2+) as cofactor.

It catalyses the reaction a UDP-3-O-[(3R)-3-hydroxyacyl]-N-acetyl-alpha-D-glucosamine + H2O = a UDP-3-O-[(3R)-3-hydroxyacyl]-alpha-D-glucosamine + acetate. The protein operates within glycolipid biosynthesis; lipid IV(A) biosynthesis; lipid IV(A) from (3R)-3-hydroxytetradecanoyl-[acyl-carrier-protein] and UDP-N-acetyl-alpha-D-glucosamine: step 2/6. Its function is as follows. Catalyzes the hydrolysis of UDP-3-O-myristoyl-N-acetylglucosamine to form UDP-3-O-myristoylglucosamine and acetate, the committed step in lipid A biosynthesis. This Rickettsia conorii (strain ATCC VR-613 / Malish 7) protein is UDP-3-O-acyl-N-acetylglucosamine deacetylase.